We begin with the raw amino-acid sequence, 220 residues long: Ribosomal RNA large subunit methyltransferase E (220 aa).

S-adenosyl-L-methionine contacts are provided by G60, W62, D92, D108, and D133. K173 functions as the Proton acceptor in the catalytic mechanism. The segment at 195–220 (APRKPKASRDKSSETFILGRHLKRPR) is disordered.

Belongs to the class I-like SAM-binding methyltransferase superfamily. RNA methyltransferase RlmE family.

The protein resides in the cytoplasm. The enzyme catalyses uridine(2552) in 23S rRNA + S-adenosyl-L-methionine = 2'-O-methyluridine(2552) in 23S rRNA + S-adenosyl-L-homocysteine + H(+). Its function is as follows. Specifically methylates the uridine in position 2552 of 23S rRNA at the 2'-O position of the ribose in the fully assembled 50S ribosomal subunit. The polypeptide is Ribosomal RNA large subunit methyltransferase E (Burkholderia lata (strain ATCC 17760 / DSM 23089 / LMG 22485 / NCIMB 9086 / R18194 / 383)).